A 218-amino-acid chain; its full sequence is Molybdenum cofactor guanylyltransferase (218 aa).

GTP is bound by residues 16-18, Lys28, Asn56, Asp74, and Asp109; that span reads LAG. Residue Asp109 participates in Mg(2+) binding.

The protein belongs to the MobA family. Monomer. Mg(2+) serves as cofactor.

It is found in the cytoplasm. It catalyses the reaction Mo-molybdopterin + GTP + H(+) = Mo-molybdopterin guanine dinucleotide + diphosphate. Its function is as follows. Transfers a GMP moiety from GTP to Mo-molybdopterin (Mo-MPT) cofactor (Moco or molybdenum cofactor) to form Mo-molybdopterin guanine dinucleotide (Mo-MGD) cofactor. In Rhizobium meliloti (strain 1021) (Ensifer meliloti), this protein is Molybdenum cofactor guanylyltransferase.